A 348-amino-acid chain; its full sequence is Protein RecA (348 aa).

66–73 (GPESSGKT) contacts ATP.

The protein belongs to the RecA family.

The protein localises to the cytoplasm. In terms of biological role, can catalyze the hydrolysis of ATP in the presence of single-stranded DNA, the ATP-dependent uptake of single-stranded DNA by duplex DNA, and the ATP-dependent hybridization of homologous single-stranded DNAs. It interacts with LexA causing its activation and leading to its autocatalytic cleavage. This chain is Protein RecA, found in Neisseria gonorrhoeae (strain NCCP11945).